We begin with the raw amino-acid sequence, 143 residues long: Hemoglobin subunit alpha (143 aa).

At Ser2 the chain carries N-acetylserine. The 142-residue stretch at 2–143 (SLSDTDKAVV…LALALSEKYR (142 aa)) folds into the Globin domain. Residue His60 coordinates O2. A heme b-binding site is contributed by His89.

The protein belongs to the globin family. Heterotetramer of two alpha chains and two beta chains. As to expression, red blood cells.

Functionally, involved in oxygen transport from gills to the various peripheral tissues. The protein is Hemoglobin subunit alpha (hbaa1) of Danio rerio (Zebrafish).